The chain runs to 469 residues: tRNA-2-methylthio-N(6)-dimethylallyladenosine synthase (469 aa).

Residues arginine 22–glutamate 142 enclose the MTTase N-terminal domain. [4Fe-4S] cluster-binding residues include cysteine 31, cysteine 67, cysteine 105, cysteine 183, cysteine 187, and cysteine 190. The Radical SAM core domain maps to arginine 169–glutamate 401. Positions glutamate 404–glutamate 466 constitute a TRAM domain.

It belongs to the methylthiotransferase family. MiaB subfamily. As to quaternary structure, monomer. The cofactor is [4Fe-4S] cluster.

It is found in the cytoplasm. It catalyses the reaction N(6)-dimethylallyladenosine(37) in tRNA + (sulfur carrier)-SH + AH2 + 2 S-adenosyl-L-methionine = 2-methylsulfanyl-N(6)-dimethylallyladenosine(37) in tRNA + (sulfur carrier)-H + 5'-deoxyadenosine + L-methionine + A + S-adenosyl-L-homocysteine + 2 H(+). Functionally, catalyzes the methylthiolation of N6-(dimethylallyl)adenosine (i(6)A), leading to the formation of 2-methylthio-N6-(dimethylallyl)adenosine (ms(2)i(6)A) at position 37 in tRNAs that read codons beginning with uridine. This chain is tRNA-2-methylthio-N(6)-dimethylallyladenosine synthase, found in Rhizobium etli (strain ATCC 51251 / DSM 11541 / JCM 21823 / NBRC 15573 / CFN 42).